We begin with the raw amino-acid sequence, 611 residues long: tRNA uridine 5-carboxymethylaminomethyl modification enzyme MnmG (611 aa).

12–17 (GGGHSG) is an FAD binding site. Residue 271–285 (GPRYCPSIEEKVYRF) participates in NAD(+) binding.

Belongs to the MnmG family. Homodimer. Heterotetramer of two MnmE and two MnmG subunits. FAD is required as a cofactor.

Its subcellular location is the cytoplasm. Its function is as follows. NAD-binding protein involved in the addition of a carboxymethylaminomethyl (cmnm) group at the wobble position (U34) of certain tRNAs, forming tRNA-cmnm(5)s(2)U34. This chain is tRNA uridine 5-carboxymethylaminomethyl modification enzyme MnmG, found in Karelsulcia muelleri (strain GWSS) (Sulcia muelleri).